We begin with the raw amino-acid sequence, 132 residues long: Telomere bouquet protein 1 (132 aa).

As to quaternary structure, interacts with bqt2 and sad1. The bqt1-bqt2-sad1 complex binds rap1.

It is found in the cytoplasm. The protein localises to the cytoskeleton. It localises to the microtubule organizing center. The protein resides in the spindle pole body. Its subcellular location is the chromosome. It is found in the telomere. Involved in chromosome segregation. During meiotic prophase, connects telomeres to the spindle pole body by forming a bridge between the telomere protein rap1 and the spindle pole body protein sad1. The sequence is that of Telomere bouquet protein 1 (bqt1) from Schizosaccharomyces pombe (strain 972 / ATCC 24843) (Fission yeast).